The following is a 193-amino-acid chain: dTTP/UTP pyrophosphatase (193 aa).

D71 functions as the Proton acceptor in the catalytic mechanism.

The protein belongs to the Maf family. YhdE subfamily. A divalent metal cation serves as cofactor.

It is found in the cytoplasm. It carries out the reaction dTTP + H2O = dTMP + diphosphate + H(+). The catalysed reaction is UTP + H2O = UMP + diphosphate + H(+). In terms of biological role, nucleoside triphosphate pyrophosphatase that hydrolyzes dTTP and UTP. May have a dual role in cell division arrest and in preventing the incorporation of modified nucleotides into cellular nucleic acids. This is dTTP/UTP pyrophosphatase from Dictyoglomus turgidum (strain DSM 6724 / Z-1310).